The following is a 294-amino-acid chain: Small ribosomal subunit protein uS3 (294 aa).

In terms of domain architecture, KH type-2 spans 39–107; the sequence is VREYLKTKLK…PVAVNIEEVR (69 aa). The tract at residues 210 to 294 is disordered; it reads RNDLPAVETP…AAPAADVKGE (85 aa). Residues 219–238 show a composition bias toward basic and acidic residues; sequence PRPDEERRPRGPRRDGRPGG. Composition is skewed to low complexity over residues 249 to 258 and 281 to 294; these read RPAAGNSAPA and VAAPAAPAADVKGE.

This sequence belongs to the universal ribosomal protein uS3 family. In terms of assembly, part of the 30S ribosomal subunit. Forms a tight complex with proteins S10 and S14.

Functionally, binds the lower part of the 30S subunit head. Binds mRNA in the 70S ribosome, positioning it for translation. This chain is Small ribosomal subunit protein uS3, found in Verminephrobacter eiseniae (strain EF01-2).